Here is a 196-residue protein sequence, read N- to C-terminus: Calmodulin-like protein 4 (196 aa).

Positions 1–43 are disordered; that stretch reads MAAEHLLPGPPPSLADFRLEAGGKGTERGSGSSKPTGSSRGPR. Basic and acidic residues predominate over residues 17–27; the sequence is FRLEAGGKGTE. Over residues 29–39 the composition is skewed to polar residues; the sequence is GSGSSKPTGSS. EF-hand domains are found at residues 51–86, 87–122, 124–159, and 160–195; these read DQINEYKECFSLYDKQQRGKIKATDLMVAMRCLGAS, PTPGEVQRHLQTHGIDGNGELDFSTFLTIMHMQIKQ, DPKKEILLAMLMVDKEKKGYVMASDLRSKLTSLGEK, and LTHKEVDDLFREADIEPNGKVKYDEFIHKITLPGRD.

The protein belongs to the calmodulin family. As to quaternary structure, interacts with MYO7B; the interaction mediates the association of CALML4 with the IMAC/intermicrovillar adhesion complex. Interacts with MYO7A. Expressed in the intestinal tract. In terms of tissue distribution, dominant transcript in the intestinal tract.

Its subcellular location is the cell projection. It is found in the microvillus. Its function is as follows. As part of the intermicrovillar adhesion complex/IMAC plays a role in epithelial brush border differentiation, controlling microvilli organization and length. Acts as a light chain for MYO7B and is required for efficient targeting of the IMAC to the tips of border brush microvilli. In Homo sapiens (Human), this protein is Calmodulin-like protein 4.